We begin with the raw amino-acid sequence, 1194 residues long: Multidrug efflux ATP-binding/permease protein Rv0194 (1194 aa).

6 helical membrane-spanning segments follow: residues 20–40 (LLLG…VPLV), 56–76 (LAPW…LMYV), 130–150 (LLFD…GVAV), 153–173 (WLSV…GLIA), 258–278 (FALG…FVAF), and 279–299 (WACL…LTIA). The 281-residue stretch at 21–301 (LLGFGAALAG…LAGMLTIAQQ (281 aa)) folds into the ABC transmembrane type-1 1 domain. One can recognise an ABC transporter 1 domain in the interval 334-568 (LEFQRVSFGY…CPRYRELLSP (235 aa)). 367–374 (GAPGSGKS) provides a ligand contact to ATP. Helical transmembrane passes span 628–648 (ALSL…PLLI), 660–680 (VLSA…IRWV), 743–763 (LVVA…LLAI), 765–785 (ARLV…TWQF), 847–867 (LLAL…TLVL), and 878–898 (VISV…YTPI). An ABC transmembrane type-1 2 domain is found at 628-910 (ALSLLLVAVQ…LAQMFDDYQR (283 aa)). One can recognise an ABC transporter 2 domain in the interval 942–1177 (VVFDAVHYSY…GGHYSRLWAA (236 aa)). 976 to 983 (GSTGSGKS) provides a ligand contact to ATP.

Belongs to the ABC transporter superfamily. Lipid exporter (TC 3.A.1.106) family.

The protein resides in the cell inner membrane. Efflux is inhibited by reserpine. Functionally, overexpression in M.smegmatis increases resistance to erythromycin, ampicillin, novobiocin and vancomycin. It also reduces accumulation of ethidium bromide in the cell. The chain is Multidrug efflux ATP-binding/permease protein Rv0194 from Mycobacterium tuberculosis (strain ATCC 25618 / H37Rv).